The sequence spans 419 residues: L-rhamnose isomerase (419 aa).

3 residues coordinate Mn(2+): His-262, Asp-294, and Asp-296.

Belongs to the rhamnose isomerase family. In terms of assembly, homotetramer. Mn(2+) is required as a cofactor.

It localises to the cytoplasm. It carries out the reaction L-rhamnopyranose = L-rhamnulose. It functions in the pathway carbohydrate degradation; L-rhamnose degradation; glycerone phosphate from L-rhamnose: step 1/3. Functionally, catalyzes the interconversion of L-rhamnose and L-rhamnulose. The chain is L-rhamnose isomerase from Escherichia coli O17:K52:H18 (strain UMN026 / ExPEC).